Reading from the N-terminus, the 324-residue chain is Probable UDP-sugar transporter protein SLC35A4 (324 aa).

Over 1-18 (MSVEDGGMPGLSRPRQAR) the chain is Cytoplasmic. Residues 19-39 (WTLMLLLSTAMYGAHAPLLAL) form a helical membrane-spanning segment. Over 40-52 (CHVDGRVPFRPSS) the chain is Lumenal. A helical membrane pass occupies residues 53-73 (AVLLTELTKLLLCAFSLLVGW). Topologically, residues 74-85 (QAWPQGAPPWRQ) are cytoplasmic. Residues 86–106 (AAPFALSALLYGANNNLVIYL) form a helical membrane-spanning segment. The Lumenal portion of the chain corresponds to 107 to 142 (QRYMDPSTYQVLSNLKIGSTAVLYCLCLRHRLSVRQ). The chain crosses the membrane as a helical span at residues 143–163 (GLALLLLMAAGACYAAGGLQV). The Cytoplasmic segment spans residues 164-180 (PGNTLPRPPPAAAASPM). A helical transmembrane segment spans residues 181 to 201 (PLHITPLGLLLLILYCLISGL). Over 202–214 (SSVYTELLMKRQQ) the chain is Lumenal. The chain crosses the membrane as a helical span at residues 215 to 235 (LPLALQNLFLYTFGVLLNLGL). Topologically, residues 236–250 (HAGGGPGPGLLEGFS) are cytoplasmic. Residues 251 to 271 (GWAALVVLSQALNGLLMSVVM) form a helical membrane-spanning segment. Topologically, residues 272–275 (KHGS) are lumenal. Residues 276 to 298 (SITRLFVVSCSLVVNAVLSAVLL) form a helical membrane-spanning segment. The Cytoplasmic segment spans residues 299–324 (RLQLTAAFFLATLLIGLAMRLYYGSR).

The protein belongs to the nucleotide-sugar transporter family. SLC35A subfamily. In terms of assembly, found in a complex with SLC35A2 and SLC35A3.

The protein localises to the golgi apparatus membrane. It carries out the reaction CDP-L-ribitol(in) + CDP(out) = CDP-L-ribitol(out) + CDP(in). Mediates the transport of CDP-ribitol. Does not exhibit CMP-sialic acid, UDP-galactose and UDP-N-acetylglucosamine transport activity. In Pongo abelii (Sumatran orangutan), this protein is Probable UDP-sugar transporter protein SLC35A4.